Consider the following 305-residue polypeptide: MSMKRPQDHSKQEMAARIIQKAWKTFLNVSVFQHFKSLIDLRRQGEPRQIVKYINPKEAELLDAAAGVQVRFRLGGVKFPPEIYYKIFTHRHIEDLCANSPRDYTKLPARYASHNKDDPPQVEDNSGWYRRIENNGWRPVSNRFWMPTENEVLESTKESEFHFSKLKRKQDLEKKRKIKKIEWMRQMYYLGSLEAKVTDRETLVLIHKATKGLIKSIEDGGVDSVMEWEVDEVLNWTNTLNFDDYIASWRETATSNSSAYLKDAKLQRIQKSLQRKIYEDETKESEEKIYYDGDFYENVYIKPLL.

Can homodimerize. Interacts with MFF; the interaction inhibits MFF interaction with DNM1L.

It localises to the cytoplasm. The protein localises to the cytosol. The protein resides in the mitochondrion outer membrane. Functionally, acts as an inhibitor of mitochondrial fission. Interacts with MFF and prevents DNM1L recruitment to mitochondria, promoting a more fused mitochondrial network. The polypeptide is Protein MFI (Rattus norvegicus (Rat)).